The primary structure comprises 291 residues: ATP synthase gamma chain (291 aa).

This sequence belongs to the ATPase gamma chain family. F-type ATPases have 2 components, CF(1) - the catalytic core - and CF(0) - the membrane proton channel. CF(1) has five subunits: alpha(3), beta(3), gamma(1), delta(1), epsilon(1). CF(0) has three main subunits: a, b and c.

The protein resides in the cell membrane. Produces ATP from ADP in the presence of a proton gradient across the membrane. The gamma chain is believed to be important in regulating ATPase activity and the flow of protons through the CF(0) complex. In Streptococcus equi subsp. equi (strain 4047), this protein is ATP synthase gamma chain.